A 269-amino-acid chain; its full sequence is Putative pyruvate, phosphate dikinase regulatory protein (269 aa).

Position 151-158 (151-158 (GVSRSSKT)) interacts with ADP.

The protein belongs to the pyruvate, phosphate/water dikinase regulatory protein family. PDRP subfamily.

The enzyme catalyses N(tele)-phospho-L-histidyl/L-threonyl-[pyruvate, phosphate dikinase] + ADP = N(tele)-phospho-L-histidyl/O-phospho-L-threonyl-[pyruvate, phosphate dikinase] + AMP + H(+). It catalyses the reaction N(tele)-phospho-L-histidyl/O-phospho-L-threonyl-[pyruvate, phosphate dikinase] + phosphate + H(+) = N(tele)-phospho-L-histidyl/L-threonyl-[pyruvate, phosphate dikinase] + diphosphate. Bifunctional serine/threonine kinase and phosphorylase involved in the regulation of the pyruvate, phosphate dikinase (PPDK) by catalyzing its phosphorylation/dephosphorylation. This is Putative pyruvate, phosphate dikinase regulatory protein from Geobacter sulfurreducens (strain ATCC 51573 / DSM 12127 / PCA).